The chain runs to 607 residues: UvrABC system protein C (607 aa).

Residues 11-89 (CKPGVYRFED…IKEFAPPCNV (79 aa)) enclose the GIY-YIG domain. A UVR domain is found at 201-236 (SSLLESLKKKMLKASKNKEYEEAAILRDKIQAAQTV).

This sequence belongs to the UvrC family. In terms of assembly, interacts with UvrB in an incision complex.

It is found in the cytoplasm. Functionally, the UvrABC repair system catalyzes the recognition and processing of DNA lesions. UvrC both incises the 5' and 3' sides of the lesion. The N-terminal half is responsible for the 3' incision and the C-terminal half is responsible for the 5' incision. The chain is UvrABC system protein C from Tropheryma whipplei (strain TW08/27) (Whipple's bacillus).